A 150-amino-acid polypeptide reads, in one-letter code: UPF0756 membrane protein YE1142 (150 aa).

A run of 4 helical transmembrane segments spans residues 1–21 (MAAL…GIIS), 51–71 (YGLT…IASG), 88–108 (ILAI…VSLM), and 114–134 (VVAG…GVPV).

This sequence belongs to the UPF0756 family.

The protein resides in the cell membrane. The protein is UPF0756 membrane protein YE1142 of Yersinia enterocolitica serotype O:8 / biotype 1B (strain NCTC 13174 / 8081).